The primary structure comprises 397 residues: Mannitol-1-phosphate 5-dehydrogenase (397 aa).

An NAD(+)-binding site is contributed by 9-20 (AVHFGAGNIGRG). Residue Lys220 is part of the active site.

The protein belongs to the mannitol dehydrogenase family. Monomer.

It catalyses the reaction D-mannitol 1-phosphate + NAD(+) = beta-D-fructose 6-phosphate + NADH + H(+). In terms of biological role, catalyzes the NAD(H)-dependent interconversion of D-fructose 6-phosphate and D-mannitol 1-phosphate in the mannitol metabolic pathway. This chain is Mannitol-1-phosphate 5-dehydrogenase, found in Podospora anserina (strain S / ATCC MYA-4624 / DSM 980 / FGSC 10383) (Pleurage anserina).